A 103-amino-acid polypeptide reads, in one-letter code: PTS system oligo-beta-mannoside-specific EIIB component (103 aa).

Positions 1–103 constitute a PTS EIIB type-3 domain; sequence MKKILLACSS…EQALSLMVNQ (103 aa). The active-site Phosphocysteine intermediate is cysteine 8. Cysteine 8 carries the post-translational modification Phosphocysteine; by EIIA.

The protein resides in the cytoplasm. It carries out the reaction D-cellobiose(out) + N(pros)-phospho-L-histidyl-[protein] = 6-phospho-beta-D-glucosyl-(1-&gt;4)-D-glucose(in) + L-histidyl-[protein]. Its function is as follows. The phosphoenolpyruvate-dependent sugar phosphotransferase system (sugar PTS), a major carbohydrate active transport system, catalyzes the phosphorylation of incoming sugar substrates concomitantly with their translocation across the cell membrane. The enzyme II GmuABC PTS system is involved in the transport of oligo-glucomannans such as cellobiose or mannobiose. This chain is PTS system oligo-beta-mannoside-specific EIIB component, found in Bacillus subtilis (strain 168).